The sequence spans 180 residues: D-glycero-beta-D-manno-heptose-1,7-bisphosphate 7-phosphatase (180 aa).

The Nucleophile role is filled by aspartate 14. 2 residues coordinate Mg(2+): aspartate 14 and aspartate 16. Substrate-binding positions include 14-16 (DRD), 22-25 (NDHY), and 56-59 (TNQS). The active-site Proton donor is the aspartate 16. 4 residues coordinate Zn(2+): cysteine 95, histidine 97, cysteine 110, and histidine 112. 113–114 (RK) provides a ligand contact to substrate. Residue aspartate 139 coordinates Mg(2+).

Belongs to the gmhB family. As to quaternary structure, monomer. Mg(2+) serves as cofactor.

The protein resides in the cytoplasm. The catalysed reaction is D-glycero-beta-D-manno-heptose 1,7-bisphosphate + H2O = D-glycero-beta-D-manno-heptose 1-phosphate + phosphate. It functions in the pathway nucleotide-sugar biosynthesis; ADP-L-glycero-beta-D-manno-heptose biosynthesis; ADP-L-glycero-beta-D-manno-heptose from D-glycero-beta-D-manno-heptose 7-phosphate: step 2/4. Its pathway is bacterial outer membrane biogenesis; LPS core biosynthesis. Converts the D-glycero-beta-D-manno-heptose 1,7-bisphosphate (beta-HBP) intermediate into D-glycero-beta-D-manno-heptose 1-phosphate by removing the phosphate group at the C-7 position. Also catalyzes the dephosphorylation of D-glycero-alpha-D-manno-heptose 1,7-bisphosphate in vitro. This is D-glycero-beta-D-manno-heptose-1,7-bisphosphate 7-phosphatase from Rhodopseudomonas palustris (strain ATCC BAA-98 / CGA009).